The sequence spans 621 residues: Phosphatidylinositol-3,5-bisphosphate 3-phosphatase MTMR6 (621 aa).

Residues Met1 to Gln101 form the GRAM domain. An interaction with RAB1B region spans residues Glu2–Asn141. Tyr108 carries the post-translational modification Phosphotyrosine. The Myotubularin phosphatase domain occupies Gly124–Tyr499. Positions 248, 273, and 274 each coordinate a 1,2-diacyl-sn-glycero-3-phospho-(1D-myo-inositol-3,5-bisphosphate). Residues Asn248, Asn273, and Ile274 each contribute to the a 1,2-diacyl-sn-glycero-3-phospho-(1D-myo-inositol-3-phosphate) site. The active-site Phosphocysteine intermediate is the Cys336. Residues Ser337, Asp338, Gly339, Trp340, Asp341, Arg342, Lys378, and Arg382 each contribute to the a 1,2-diacyl-sn-glycero-3-phospho-(1D-myo-inositol-3,5-bisphosphate) site. Residues Ser337, Asp338, Gly339, Trp340, Asp341, and Arg342 each coordinate a 1,2-diacyl-sn-glycero-3-phospho-(1D-myo-inositol-3-phosphate). Arg382 provides a ligand contact to a 1,2-diacyl-sn-glycero-3-phospho-(1D-myo-inositol-3-phosphate). Phosphoserine is present on residues Ser556, Ser561, Ser589, and Ser611.

This sequence belongs to the protein-tyrosine phosphatase family. Non-receptor class myotubularin subfamily. Homodimer. Heterodimer (via C-terminus) with MTMR9 (via C-terminus). Interacts with ALKBH4. Interacts with KCNN4. Interacts (via GRAM domain) with RAB1B (in GDP-bound form); the interaction regulates MTMR6 recruitment to the endoplasmic reticulum-Golgi intermediate compartment. As to expression, expressed in CD4+ T-cells.

Its subcellular location is the cytoplasm. It localises to the endoplasmic reticulum-Golgi intermediate compartment. It is found in the endoplasmic reticulum. The protein resides in the cell projection. The protein localises to the ruffle membrane. Its subcellular location is the perinuclear region. It carries out the reaction a 1,2-diacyl-sn-glycero-3-phospho-(1D-myo-inositol-3,5-bisphosphate) + H2O = a 1,2-diacyl-sn-glycero-3-phospho-(1D-myo-inositol-5-phosphate) + phosphate. The enzyme catalyses a 1,2-diacyl-sn-glycero-3-phospho-(1D-myo-inositol-3-phosphate) + H2O = a 1,2-diacyl-sn-glycero-3-phospho-(1D-myo-inositol) + phosphate. It catalyses the reaction 1,2-dioctanoyl-sn-glycero-3-phospho-(1D-myo-inositol-3,5-bisphosphate) + H2O = 1,2-dioctanoyl-sn-glycero-3-phospho-(1D-myo-inositol-5-phosphate) + phosphate. The catalysed reaction is 1,2-dioctanoyl-sn-glycero-3-phospho-(1-D-myo-inositol-3-phosphate) + H2O = 1,2-dioctanoyl-sn-glycero-3-phospho-(1D-myo-inositol) + phosphate. With respect to regulation, allosterically activated by phosphatidylserine and/or phosphatidylinositol 4-phosphate (PtdIns(4)P), and phosphatidylinositol 5-phosphate (PtdIns(5)P). Interaction with MTMR9 increases catalytic activity towards phosphatidylinositol 3,5-bisphosphate. Functionally, lipid phosphatase that specifically dephosphorylates the D-3 position of phosphatidylinositol 3-phosphate and phosphatidylinositol 3,5-bisphosphate, generating phosphatidylinositol and phosphatidylinositol 5-phosphate. Binds with high affinity to phosphatidylinositol 3,5-bisphosphate (PtdIns(3,5)P2) but also to phosphatidylinositol 3-phosphate (PtdIns(3)P), phosphatidylinositol 4-phosphate (PtdIns(4)P), and phosphatidylinositol 5-phosphate (PtdIns(5)P), phosphatidic acid and phosphatidylserine. Negatively regulates ER-Golgi protein transport. Probably in association with MTMR9, plays a role in the late stages of macropinocytosis by dephosphorylating phosphatidylinositol 3-phosphate in membrane ruffles. Acts as a negative regulator of KCNN4/KCa3.1 channel activity in CD4(+) T-cells possibly by decreasing intracellular levels of phosphatidylinositol 3-phosphate. Negatively regulates proliferation of reactivated CD4(+) T-cells. In complex with MTMR9, negatively regulates DNA damage-induced apoptosis. The formation of the MTMR6-MTMR9 complex stabilizes both MTMR6 and MTMR9 protein levels. This Homo sapiens (Human) protein is Phosphatidylinositol-3,5-bisphosphate 3-phosphatase MTMR6.